A 168-amino-acid chain; its full sequence is Protein-export protein SecB (168 aa).

The protein belongs to the SecB family. Homotetramer, a dimer of dimers. One homotetramer interacts with 1 SecA dimer.

It localises to the cytoplasm. Its function is as follows. One of the proteins required for the normal export of preproteins out of the cell cytoplasm. It is a molecular chaperone that binds to a subset of precursor proteins, maintaining them in a translocation-competent state. It also specifically binds to its receptor SecA. This chain is Protein-export protein SecB, found in Haemophilus influenzae (strain PittGG).